A 31-amino-acid chain; its full sequence is Unknown protein from spot 104 of 2D-PAGE of thylakoid (31 aa).

It is found in the plastid. Its subcellular location is the chloroplast thylakoid. The chain is Unknown protein from spot 104 of 2D-PAGE of thylakoid from Pisum sativum (Garden pea).